A 367-amino-acid polypeptide reads, in one-letter code: Quinolinate synthase (367 aa).

Iminosuccinate-binding residues include His-45 and Ser-62. Cys-109 is a binding site for [4Fe-4S] cluster. Residues 140-142 (YVN) and Ser-161 each bind iminosuccinate. A [4Fe-4S] cluster-binding site is contributed by Cys-229. Iminosuccinate contacts are provided by residues 255-257 (HPE) and Thr-272. A [4Fe-4S] cluster-binding site is contributed by Cys-319.

Belongs to the quinolinate synthase family. Type 3 subfamily. [4Fe-4S] cluster is required as a cofactor.

Its subcellular location is the cytoplasm. The catalysed reaction is iminosuccinate + dihydroxyacetone phosphate = quinolinate + phosphate + 2 H2O + H(+). It functions in the pathway cofactor biosynthesis; NAD(+) biosynthesis; quinolinate from iminoaspartate: step 1/1. In terms of biological role, catalyzes the condensation of iminoaspartate with dihydroxyacetone phosphate to form quinolinate. This is Quinolinate synthase from Halalkalibacterium halodurans (strain ATCC BAA-125 / DSM 18197 / FERM 7344 / JCM 9153 / C-125) (Bacillus halodurans).